The primary structure comprises 369 residues: NAD(P)H-quinone oxidoreductase subunit 1, chloroplastic (369 aa).

Transmembrane regions (helical) follow at residues 29–49 (IWII…VLVI), 97–117 (IWLF…SYLV), 129–149 (LGIG…GLLM), 167–187 (AAQS…ISLL), 205–225 (LLGW…ISSL), 255–275 (FGLF…FVTV), 305–325 (IINA…FLFV), and 348–368 (FLLP…ILLL).

The protein belongs to the complex I subunit 1 family. NDH is composed of at least 16 different subunits, 5 of which are encoded in the nucleus.

It is found in the plastid. It localises to the chloroplast thylakoid membrane. The catalysed reaction is a plastoquinone + NADH + (n+1) H(+)(in) = a plastoquinol + NAD(+) + n H(+)(out). The enzyme catalyses a plastoquinone + NADPH + (n+1) H(+)(in) = a plastoquinol + NADP(+) + n H(+)(out). Its function is as follows. NDH shuttles electrons from NAD(P)H:plastoquinone, via FMN and iron-sulfur (Fe-S) centers, to quinones in the photosynthetic chain and possibly in a chloroplast respiratory chain. The immediate electron acceptor for the enzyme in this species is believed to be plastoquinone. Couples the redox reaction to proton translocation, and thus conserves the redox energy in a proton gradient. In Angiopteris evecta (Mule's foot fern), this protein is NAD(P)H-quinone oxidoreductase subunit 1, chloroplastic.